The primary structure comprises 283 residues: Elongation factor Ts (283 aa).

Residues 80-83 (TDFV) are involved in Mg(2+) ion dislocation from EF-Tu.

Belongs to the EF-Ts family.

It localises to the cytoplasm. Functionally, associates with the EF-Tu.GDP complex and induces the exchange of GDP to GTP. It remains bound to the aminoacyl-tRNA.EF-Tu.GTP complex up to the GTP hydrolysis stage on the ribosome. The sequence is that of Elongation factor Ts from Erwinia tasmaniensis (strain DSM 17950 / CFBP 7177 / CIP 109463 / NCPPB 4357 / Et1/99).